We begin with the raw amino-acid sequence, 1365 residues long: DNA-directed RNA polymerase subunit beta'' (1365 aa).

Positions 224, 295, 302, and 305 each coordinate Zn(2+).

It belongs to the RNA polymerase beta' chain family. RpoC2 subfamily. As to quaternary structure, in plastids the minimal PEP RNA polymerase catalytic core is composed of four subunits: alpha, beta, beta', and beta''. When a (nuclear-encoded) sigma factor is associated with the core the holoenzyme is formed, which can initiate transcription. The cofactor is Zn(2+).

Its subcellular location is the plastid. The protein resides in the chloroplast. It catalyses the reaction RNA(n) + a ribonucleoside 5'-triphosphate = RNA(n+1) + diphosphate. DNA-dependent RNA polymerase catalyzes the transcription of DNA into RNA using the four ribonucleoside triphosphates as substrates. The sequence is that of DNA-directed RNA polymerase subunit beta'' from Fagopyrum esculentum subsp. ancestrale (Wild buckwheat).